The chain runs to 909 residues: Ribosome-releasing factor 2, mitochondrial (909 aa).

Residues 1–15 (MVAAPLLRAHQAARL) constitute a mitochondrion transit peptide. The tr-type G domain maps to 57–367 (DRTRNIGIIA…AVTNLLPSPP (311 aa)). Residue 66 to 73 (AHIDAGKT) coordinates GTP. The interval 121-148 (WPPQTAGDGNTTPQEPQTPRSASSHTVN) is disordered. Over residues 127–148 (GDGNTTPQEPQTPRSASSHTVN) the composition is skewed to polar residues. Residues 151-155 (DTPGH) and 205-208 (NKLD) each bind GTP.

Belongs to the TRAFAC class translation factor GTPase superfamily. Classic translation factor GTPase family. EF-G/EF-2 subfamily.

Its subcellular location is the mitochondrion. Functionally, mitochondrial GTPase that mediates the disassembly of ribosomes from messenger RNA at the termination of mitochondrial protein biosynthesis. Not involved in the GTP-dependent ribosomal translocation step during translation elongation. This is Ribosome-releasing factor 2, mitochondrial (mef2) from Aspergillus flavus (strain ATCC 200026 / FGSC A1120 / IAM 13836 / NRRL 3357 / JCM 12722 / SRRC 167).